The chain runs to 96 residues: Co-chaperonin GroES (96 aa).

The protein belongs to the GroES chaperonin family. Heptamer of 7 subunits arranged in a ring. Interacts with the chaperonin GroEL.

Its subcellular location is the cytoplasm. In terms of biological role, together with the chaperonin GroEL, plays an essential role in assisting protein folding. The GroEL-GroES system forms a nano-cage that allows encapsulation of the non-native substrate proteins and provides a physical environment optimized to promote and accelerate protein folding. GroES binds to the apical surface of the GroEL ring, thereby capping the opening of the GroEL channel. The polypeptide is Co-chaperonin GroES (Photobacterium profundum (strain SS9)).